The sequence spans 211 residues: Pyridoxine/pyridoxamine 5'-phosphate oxidase (211 aa).

Substrate contacts are provided by residues 8–11 and K66; that span reads RNEY. Residues 61-66, 76-77, K83, and Q105 each bind FMN; these read RVVLLK and FT. Substrate-binding residues include Y123, R127, and S131. FMN-binding positions include 140-141 and W184; that span reads QS. 190 to 192 is a binding site for substrate; sequence RLH. R194 contributes to the FMN binding site.

It belongs to the pyridoxamine 5'-phosphate oxidase family. Homodimer. Requires FMN as cofactor.

The enzyme catalyses pyridoxamine 5'-phosphate + O2 + H2O = pyridoxal 5'-phosphate + H2O2 + NH4(+). It carries out the reaction pyridoxine 5'-phosphate + O2 = pyridoxal 5'-phosphate + H2O2. Its pathway is cofactor metabolism; pyridoxal 5'-phosphate salvage; pyridoxal 5'-phosphate from pyridoxamine 5'-phosphate: step 1/1. The protein operates within cofactor metabolism; pyridoxal 5'-phosphate salvage; pyridoxal 5'-phosphate from pyridoxine 5'-phosphate: step 1/1. Catalyzes the oxidation of either pyridoxine 5'-phosphate (PNP) or pyridoxamine 5'-phosphate (PMP) into pyridoxal 5'-phosphate (PLP). The chain is Pyridoxine/pyridoxamine 5'-phosphate oxidase from Mannheimia succiniciproducens (strain KCTC 0769BP / MBEL55E).